A 433-amino-acid polypeptide reads, in one-letter code: Elongation factor 1-alpha (433 aa).

A tr-type G domain is found at 5–227; that stretch reads KPHLNLVVIG…AFDFFKEPPR (223 aa). Residues 14-21 are G1; sequence GHIDHGKS. Residue 14–21 coordinates GTP; the sequence is GHIDHGKS. A Mg(2+)-binding site is contributed by Ser21. The interval 70-74 is G2; the sequence is GITID. The segment at 91–94 is G3; that stretch reads DAPG. GTP is bound by residues 91 to 95 and 153 to 156; these read DAPGH and NKMD. Positions 153–156 are G4; the sequence is NKMD. A G5 region spans residues 192 to 194; sequence SAW.

It belongs to the TRAFAC class translation factor GTPase superfamily. Classic translation factor GTPase family. EF-Tu/EF-1A subfamily.

Its subcellular location is the cytoplasm. The catalysed reaction is GTP + H2O = GDP + phosphate + H(+). Its function is as follows. GTP hydrolase that promotes the GTP-dependent binding of aminoacyl-tRNA to the A-site of ribosomes during protein biosynthesis. In Thermofilum pendens (strain DSM 2475 / Hrk 5), this protein is Elongation factor 1-alpha.